The primary structure comprises 60 residues: Sperm protamine P1 (60 aa).

The disordered stretch occupies residues 1–60 (MARYRHSRSRSRSRYRRRRRRRSRYRSQRRRYRGRRRRRSRRGRRRGYSRRRYSRRRRRY).

It belongs to the protamine P1 family. Testis.

The protein resides in the nucleus. It is found in the chromosome. In terms of biological role, protamines substitute for histones in the chromatin of sperm during the haploid phase of spermatogenesis. They compact sperm DNA into a highly condensed, stable and inactive complex. The chain is Sperm protamine P1 (PRM1) from Osphranter rufus (Red kangaroo).